We begin with the raw amino-acid sequence, 162 residues long: Protein archease (162 aa).

Positions 34, 161, and 162 each coordinate Ca(2+).

The protein belongs to the archease family. In terms of assembly, component of the tRNA-splicing ligase complex.

Component of the tRNA-splicing ligase complex required to facilitate the enzymatic turnover of catalytic subunit RTCB. Together with ddx1, acts by facilitating the guanylylation of RTCB, a key intermediate step in tRNA ligation. In Danio rerio (Zebrafish), this protein is Protein archease (zbtb8os).